Reading from the N-terminus, the 173-residue chain is MTRQDLASLIRNIPDFPIPGIQFKDITTLIGNGQAFSEVIDRLHERYQNQQIDAVVGIESRGFIFSAPLAYRLGVGLVPIRKPGKLPAATYQIEYQLEYGTNRLEIHRDAFQPGARVLVIDDLLATGGTIAAACDLIEMAGGQVAELAFVIELTFLNGRERLRERPVFSLIQF.

Belongs to the purine/pyrimidine phosphoribosyltransferase family. In terms of assembly, homodimer.

The protein resides in the cytoplasm. The enzyme catalyses AMP + diphosphate = 5-phospho-alpha-D-ribose 1-diphosphate + adenine. It functions in the pathway purine metabolism; AMP biosynthesis via salvage pathway; AMP from adenine: step 1/1. Catalyzes a salvage reaction resulting in the formation of AMP, that is energically less costly than de novo synthesis. The polypeptide is Adenine phosphoribosyltransferase (Chloroflexus aurantiacus (strain ATCC 29366 / DSM 635 / J-10-fl)).